The chain runs to 187 residues: ATP synthase subunit delta (187 aa).

It belongs to the ATPase delta chain family. In terms of assembly, F-type ATPases have 2 components, F(1) - the catalytic core - and F(0) - the membrane proton channel. F(1) has five subunits: alpha(3), beta(3), gamma(1), delta(1), epsilon(1). F(0) has three main subunits: a(1), b(2) and c(10-14). The alpha and beta chains form an alternating ring which encloses part of the gamma chain. F(1) is attached to F(0) by a central stalk formed by the gamma and epsilon chains, while a peripheral stalk is formed by the delta and b chains.

Its subcellular location is the cell membrane. F(1)F(0) ATP synthase produces ATP from ADP in the presence of a proton or sodium gradient. F-type ATPases consist of two structural domains, F(1) containing the extramembraneous catalytic core and F(0) containing the membrane proton channel, linked together by a central stalk and a peripheral stalk. During catalysis, ATP synthesis in the catalytic domain of F(1) is coupled via a rotary mechanism of the central stalk subunits to proton translocation. Functionally, this protein is part of the stalk that links CF(0) to CF(1). It either transmits conformational changes from CF(0) to CF(1) or is implicated in proton conduction. The protein is ATP synthase subunit delta of Mesomycoplasma hyopneumoniae (strain J / ATCC 25934 / NCTC 10110) (Mycoplasma hyopneumoniae).